Reading from the N-terminus, the 373-residue chain is 4-hydroxy-3-methylbut-2-en-1-yl diphosphate synthase (flavodoxin) (373 aa).

C270, C273, C305, and E312 together coordinate [4Fe-4S] cluster.

This sequence belongs to the IspG family. [4Fe-4S] cluster is required as a cofactor.

The catalysed reaction is (2E)-4-hydroxy-3-methylbut-2-enyl diphosphate + oxidized [flavodoxin] + H2O + 2 H(+) = 2-C-methyl-D-erythritol 2,4-cyclic diphosphate + reduced [flavodoxin]. It functions in the pathway isoprenoid biosynthesis; isopentenyl diphosphate biosynthesis via DXP pathway; isopentenyl diphosphate from 1-deoxy-D-xylulose 5-phosphate: step 5/6. Its function is as follows. Converts 2C-methyl-D-erythritol 2,4-cyclodiphosphate (ME-2,4cPP) into 1-hydroxy-2-methyl-2-(E)-butenyl 4-diphosphate. The protein is 4-hydroxy-3-methylbut-2-en-1-yl diphosphate synthase (flavodoxin) of Serratia proteamaculans (strain 568).